The sequence spans 126 residues: Fluoride-specific ion channel FluC (126 aa).

The next 4 helical transmembrane spans lie at 3-23, 37-57, 68-88, and 101-121; these read PYLL…RFLI, VGTL…ALYF, LVIT…LETV, and TNIT…MMLF. 2 residues coordinate Na(+): Gly75 and Thr78.

The protein belongs to the fluoride channel Fluc/FEX (TC 1.A.43) family.

The protein resides in the cell inner membrane. The catalysed reaction is fluoride(in) = fluoride(out). Na(+) is not transported, but it plays an essential structural role and its presence is essential for fluoride channel function. Functionally, fluoride-specific ion channel. Important for reducing fluoride concentration in the cell, thus reducing its toxicity. This is Fluoride-specific ion channel FluC from Sulfurovum sp. (strain NBC37-1).